Reading from the N-terminus, the 507-residue chain is Myocyte-specific enhancer factor 2A (507 aa).

The MADS-box domain occupies 3 to 57 (RKKIQITRIMDERNRQVTFTKRKFGLMKKAYELSVLCDCEIALIIFNSSNKLFQY). K30 carries the post-translational modification Phosphoserine. Residues 58–86 (ASTDMDKVLLKYTEYNEPHESRTNSDIVE) constitute a DNA-binding region (mef2-type). At S59 the chain carries Phosphoserine; by CK2. S98 carries the post-translational modification Phosphoserine. Over residues 173–183 (TLTDSSMLSPP) the composition is skewed to low complexity. The segment at 173 to 229 (TLTDSSMLSPPQTTLHRNVSPGAPQRPPSTGNAGGMLSTTDLTVPNGAGSSPVGNGF) is disordered. A compositionally biased stretch (polar residues) spans 209–229 (LSTTDLTVPNGAGSSPVGNGF). S235 is subject to Phosphoserine. Positions 243-270 (GANSLGKVMPTKSPPPPGGGNLGMNSRK) are disordered. K249 is modified (N6-acetyllysine). S255 carries the phosphoserine; by MAPK14 modification. A required for interaction with MAPKs region spans residues 266 to 283 (MNSRKPDLRVVIPPSSKG). The tract at residues 289 to 296 (SEEEELEL) is beta domain. Residues T312 and T319 each carry the phosphothreonine; by MAPK7 and MAPK14 modification. T312 is subject to Phosphothreonine; by NLK. S355 is modified (phosphoserine; by MAPK7). The segment at 397–507 (NQNISIKSEP…KRMRMDAWVT (111 aa)) is disordered. K403 carries the N6-acetyllysine; alternate modification. Residue K403 forms a Glycyl lysine isopeptide (Lys-Gly) (interchain with G-Cter in SUMO); alternate linkage. Residue S408 is modified to Phosphoserine; by CDK5. T415 bears the Phosphothreonine mark. Over residues 420–429 (QQQQQQQQQQ) the composition is skewed to low complexity. The segment covering 430 to 445 (QPPPPPQPQPQPPQPQ) has biased composition (pro residues). Phosphoserine; by MAPK is present on S453. Residues 453 to 466 (SPVDSLSSSSSSYD) show a composition bias toward low complexity. 2 stretches are compositionally biased toward basic and acidic residues: residues 467-477 (GSDREDPRGDF) and 488-507 (NTEDRESPSVKRMRMDAWVT).

Belongs to the MEF2 family. Binds DNA as a homo- or heterodimer. Dimerizes with MEF2D. Interacts with HDAC7. Interacts with PIAS1; the interaction enhances sumoylation. Interacts with HDAC4, HDAC9 and SLC2A4RG. Interacts (via the N-terminal) with MAPK7; the interaction results in the phosphorylation and transcriptional activity of MEF2A. Constitutive phosphorylation on Ser-408 promotes Lys-403 sumoylation thus preventing acetylation at this site. Dephosphorylation on Ser-408 by PPP3CA upon neuron depolarization promotes a switch from sumoylation to acetylation on residue Lys-403 leading to inhibition of dendrite claw differentiation. Phosphorylation on Thr-312 and Thr-319 are the main sites involved in p38 MAPK signaling and activate transcription. Phosphorylated on these sites by MAPK14/p38alpha and MAPK11/p38beta, but not by MAPK13/p38delta nor by MAPK12/p38gamma. Phosphorylation on Ser-408 by CDK5 induced by neurotoxicity inhibits MEF2A transcriptional activation leading to apoptosis of cortical neurons. Phosphorylation on Thr-312, Thr-319 and Ser-355 can be induced by EGF. In terms of processing, sumoylation on Lys-403 is enhanced by PIAS1 and represses transcriptional activity. Phosphorylation on Ser-408 is required for sumoylation. Has no effect on nuclear location nor on DNA binding. Sumoylated with SUMO1 and, to a lesser extent with SUMO2 and SUMO3. PIASx facilitates sumoylation in postsynaptic dendrites in the cerebellar cortex and promotes their morphogenesis. Post-translationally, acetylation on Lys-403 activates transcriptional activity. Acetylated by p300 on several sites in diffentiating myocytes. Acetylation on Lys-4 increases DNA binding and transactivation. Hyperacetylation by p300 leads to enhanced cardiac myocyte growth and heart failure. Proteolytically cleaved in cerebellar granule neurons on several sites by caspase 3 and caspase 7 following neurotoxicity. Preferentially cleaves the CDK5-mediated hyperphosphorylated form which leads to neuron apoptosis and transcriptional inactivation. In terms of tissue distribution, isoform MEF2 and isoform MEFA are expressed only in skeletal and cardiac muscle and in the brain. Isoform RSRFC4 and isoform RSRFC9 are expressed in all tissues examined.

Its subcellular location is the nucleus. In terms of biological role, transcriptional activator which binds specifically to the MEF2 element, 5'-YTA[AT](4)TAR-3', found in numerous muscle-specific genes. Also involved in the activation of numerous growth factor- and stress-induced genes. Mediates cellular functions not only in skeletal and cardiac muscle development, but also in neuronal differentiation and survival. Plays diverse roles in the control of cell growth, survival and apoptosis via p38 MAPK signaling in muscle-specific and/or growth factor-related transcription. In cerebellar granule neurons, phosphorylated and sumoylated MEF2A represses transcription of NUR77 promoting synaptic differentiation. Associates with chromatin to the ZNF16 promoter. The chain is Myocyte-specific enhancer factor 2A (MEF2A) from Homo sapiens (Human).